We begin with the raw amino-acid sequence, 298 residues long: tRNA pseudouridine synthase B (298 aa).

The Nucleophile role is filled by aspartate 46.

This sequence belongs to the pseudouridine synthase TruB family. Type 1 subfamily.

The enzyme catalyses uridine(55) in tRNA = pseudouridine(55) in tRNA. Its function is as follows. Responsible for synthesis of pseudouridine from uracil-55 in the psi GC loop of transfer RNAs. This chain is tRNA pseudouridine synthase B, found in Paracoccus denitrificans (strain Pd 1222).